Consider the following 1102-residue polypeptide: ATP-dependent DNA helicase MPH1 (1102 aa).

Residues 19–55 (ALDKPATSGLHSREQEQQRDISNATPHTSTDLELEDF) form a disordered region. The span at 38–49 (DISNATPHTSTD) shows a compositional bias: polar residues. The Helicase ATP-binding domain occupies 147–315 (IVKNGLFNNT…DVIDNLGVSH (169 aa)). Position 160–167 (160–167 (LPTGLGKT)) interacts with ATP. Positions 263–266 (DEAH) match the DEAH box motif. The 162-residue stretch at 490 to 651 (NLLNYFMDAG…GSRFNFRHDL (162 aa)) folds into the Helicase C-terminal domain. Disordered regions lie at residues 672 to 702 (PIEN…FNMP), 720 to 743 (ASKT…DEIS), 818 to 837 (SQGI…KSRY), and 858 to 1102 (SGRK…SESG). Positions 687-699 (RSTRGKKASKKKF) are enriched in basic residues. Basic and acidic residues predominate over residues 822–837 (ETRHTKPHGDTDKSRY). The segment covering 1003–1019 (SSGAASKSGSTASTAAK) has biased composition (low complexity). A compositionally biased stretch (acidic residues) spans 1069-1082 (SDDDDDDNDDEDDV).

Belongs to the DEAD box helicase family. DEAH subfamily. FANCM sub-subfamily. Interacts with the MHF histone-fold complex to form the FANCM-MHF complex.

It is found in the nucleus. The catalysed reaction is ATP + H2O = ADP + phosphate + H(+). In terms of biological role, ATP-dependent DNA helicase involved in DNA damage repair by homologous recombination and in genome maintenance. Capable of unwinding D-loops. Plays a role in limiting crossover recombinants during mitotic DNA double-strand break (DSB) repair. Component of a FANCM-MHF complex which promotes gene conversion at blocked replication forks, probably by reversal of the stalled fork. The chain is ATP-dependent DNA helicase MPH1 from Pyricularia oryzae (strain 70-15 / ATCC MYA-4617 / FGSC 8958) (Rice blast fungus).